The chain runs to 133 residues: MAKEFGRPQRVAQEMQKEIAIILQREIKDPRLGMMTTVSGVEMSRDLAYAKVYVTFLNDKDEDAVKAGIKALQEASGFIRTLLGKAMRLRIVPELTFFYDNSLVEGMRMSNLVTNVVKHDEERRVNPDDSKED.

The protein belongs to the RbfA family. As to quaternary structure, monomer. Binds 30S ribosomal subunits, but not 50S ribosomal subunits or 70S ribosomes.

It is found in the cytoplasm. In terms of biological role, one of several proteins that assist in the late maturation steps of the functional core of the 30S ribosomal subunit. Associates with free 30S ribosomal subunits (but not with 30S subunits that are part of 70S ribosomes or polysomes). Required for efficient processing of 16S rRNA. May interact with the 5'-terminal helix region of 16S rRNA. This chain is Ribosome-binding factor A, found in Citrobacter koseri (strain ATCC BAA-895 / CDC 4225-83 / SGSC4696).